We begin with the raw amino-acid sequence, 503 residues long: Transforming protein rel polyprotein (503 aa).

The 290-residue stretch at 16-305 folds into the RHD domain; that stretch reads PYIEIFEQPR…GNKAKRQRST (290 aa). S275 carries the post-translational modification Phosphoserine; by host PKA. Disordered regions lie at residues 286–306 and 318–342; these read RYLP…RSTL and AVTE…KEPN. The short motif at 298 to 303 is the Nuclear localization signal element; it reads KAKRQR.

It localises to the host cytoplasm. Its function is as follows. This transforming protein appears to have a protein-kinase activity. In Galliformes, this protein is Transforming protein rel polyprotein (V-REL).